Here is a 427-residue protein sequence, read N- to C-terminus: Enolase (427 aa).

Gln162 is a (2R)-2-phosphoglycerate binding site. Catalysis depends on Glu206, which acts as the Proton donor. Positions 243, 286, and 313 each coordinate Mg(2+). 4 residues coordinate (2R)-2-phosphoglycerate: Lys338, Arg367, Ser368, and Lys389. The active-site Proton acceptor is Lys338.

Belongs to the enolase family. Requires Mg(2+) as cofactor.

The protein resides in the cytoplasm. It localises to the secreted. Its subcellular location is the cell surface. It catalyses the reaction (2R)-2-phosphoglycerate = phosphoenolpyruvate + H2O. It functions in the pathway carbohydrate degradation; glycolysis; pyruvate from D-glyceraldehyde 3-phosphate: step 4/5. In terms of biological role, catalyzes the reversible conversion of 2-phosphoglycerate (2-PG) into phosphoenolpyruvate (PEP). It is essential for the degradation of carbohydrates via glycolysis. The chain is Enolase from Methanopyrus kandleri (strain AV19 / DSM 6324 / JCM 9639 / NBRC 100938).